A 255-amino-acid polypeptide reads, in one-letter code: Glycine-rich protein DOT1 (255 aa).

The first 21 residues, 1 to 21 (MANHKNLFFLCFLIGLGLCSA), serve as a signal peptide directing secretion. A disordered region spans residues 63–88 (GGGSGEGGGAGGHGEGHIGGGGGGGH).

As to expression, expressed in emerging leaf primordia and young leaves.

It is found in the secreted. In terms of biological role, involved in leaf vasculature patterning. This Arabidopsis thaliana (Mouse-ear cress) protein is Glycine-rich protein DOT1.